The primary structure comprises 180 residues: Outer-membrane lipoprotein LolB (180 aa).

Positions 1 to 16 are cleaved as a signal peptide; that stretch reads MIRRVLLLSLALLLAG. A lipid anchor (N-palmitoyl cysteine) is attached at Cys-17. The S-diacylglycerol cysteine moiety is linked to residue Cys-17.

It belongs to the LolB family. As to quaternary structure, monomer.

The protein resides in the cell outer membrane. Plays a critical role in the incorporation of lipoproteins in the outer membrane after they are released by the LolA protein. The polypeptide is Outer-membrane lipoprotein LolB (Chromobacterium violaceum (strain ATCC 12472 / DSM 30191 / JCM 1249 / CCUG 213 / NBRC 12614 / NCIMB 9131 / NCTC 9757 / MK)).